The chain runs to 1377 residues: DNA-directed RNA polymerase subunit beta' (1377 aa).

Zn(2+) is bound by residues Cys-60, Cys-62, Cys-75, and Cys-78. The Mg(2+) site is built by Asp-449, Asp-451, and Asp-453. Residues Cys-777, Cys-851, Cys-858, and Cys-861 each coordinate Zn(2+).

It belongs to the RNA polymerase beta' chain family. As to quaternary structure, the RNAP catalytic core consists of 2 alpha, 1 beta, 1 beta' and 1 omega subunit. When a sigma factor is associated with the core the holoenzyme is formed, which can initiate transcription. Mg(2+) serves as cofactor. Zn(2+) is required as a cofactor.

The enzyme catalyses RNA(n) + a ribonucleoside 5'-triphosphate = RNA(n+1) + diphosphate. In terms of biological role, DNA-dependent RNA polymerase catalyzes the transcription of DNA into RNA using the four ribonucleoside triphosphates as substrates. The chain is DNA-directed RNA polymerase subunit beta' from Borrelia turicatae (strain 91E135).